We begin with the raw amino-acid sequence, 409 residues long: MASTAKTLQAIKFDKENISLQILDQLLLPYTTHYLDIKTIEDAFSAIRLMQVRGAPAIAIVGAFAVVVDTNASLKNGGNKTVSKLFDSIDYLETSRPTAVNLANALNDIKKLVSAKFGQNDLVDEDVYQIIYKYSVALYEDDLANNFKIGANGLNYIVETLKKDGFKGAFSIVTICNTGSLATSGHGTALGIIRSTYDKLKKSESSEEFWLDHVYPCETRPYNQGAKLTTYELHYEQIPFTLICDNMVSSLVNTLSSNKNIQDNAAAPVKFIIVGADRVVKNGDTANKIGTFQLSTIANFFNSNKLSGSANKIKFIVAAPRTTIDLNTATGDEIVIEERPANELTTLKGPVLREDGSIGDKYTVGIATPGISVWNPAFDVTPHALIDAIVTEEEKVYTKNSHGEFELSK.

Asp-277 (proton donor) is an active-site residue.

The protein belongs to the eIF-2B alpha/beta/delta subunits family. MtnA subfamily.

The protein resides in the cytoplasm. It localises to the nucleus. The catalysed reaction is 5-(methylsulfanyl)-alpha-D-ribose 1-phosphate = 5-(methylsulfanyl)-D-ribulose 1-phosphate. It functions in the pathway amino-acid biosynthesis; L-methionine biosynthesis via salvage pathway; L-methionine from S-methyl-5-thio-alpha-D-ribose 1-phosphate: step 1/6. Its function is as follows. Catalyzes the interconversion of methylthioribose-1-phosphate (MTR-1-P) into methylthioribulose-1-phosphate (MTRu-1-P). The protein is Methylthioribose-1-phosphate isomerase of Scheffersomyces stipitis (strain ATCC 58785 / CBS 6054 / NBRC 10063 / NRRL Y-11545) (Yeast).